Reading from the N-terminus, the 574-residue chain is Urease subunit alpha (574 aa).

The 444-residue stretch at Gly-131–Leu-574 folds into the Urease domain. Residues His-136, His-138, and Lys-219 each contribute to the Ni(2+) site. Residue Lys-219 is modified to N6-carboxylysine. Substrate is bound at residue His-221. Ni(2+)-binding residues include His-248 and His-274. The Proton donor role is filled by His-322. Ni(2+) is bound at residue Asp-362. The segment at Lys-384–Asp-403 is disordered.

Belongs to the metallo-dependent hydrolases superfamily. Urease alpha subunit family. As to quaternary structure, heterotrimer of UreA (gamma), UreB (beta) and UreC (alpha) subunits. Three heterotrimers associate to form the active enzyme. Requires Ni cation as cofactor. Carboxylation allows a single lysine to coordinate two nickel ions.

It localises to the cytoplasm. The catalysed reaction is urea + 2 H2O + H(+) = hydrogencarbonate + 2 NH4(+). The protein operates within nitrogen metabolism; urea degradation; CO(2) and NH(3) from urea (urease route): step 1/1. The polypeptide is Urease subunit alpha (Prochlorococcus marinus (strain MIT 9313)).